We begin with the raw amino-acid sequence, 270 residues long: Allergen Asp f 7 (270 aa).

A signal peptide spans 1 to 21 (MAPIFKSLALVSALFAAISSA). Disordered regions lie at residues 53–97 (YPTP…QPTQ) and 113–167 (ADSA…GPCS). A compositionally biased stretch (low complexity) spans 63–81 (VVESTPTPTPSAAPEQAEP). Residues 83–97 (ETSTQPETTKSQPTQ) show a composition bias toward polar residues. The segment covering 127 to 149 (PATTAAPSTSTTTQAAPSAPPAA) has biased composition (low complexity). The segment covering 150–162 (NSGSTEKAASSGY) has biased composition (polar residues).

The protein is Allergen Asp f 7 of Aspergillus fumigatus (strain ATCC MYA-4609 / CBS 101355 / FGSC A1100 / Af293) (Neosartorya fumigata).